The sequence spans 173 residues: Probable calcium-binding protein CML14 (173 aa).

EF-hand domains follow at residues 21–56, 57–92, 97–132, and 133–168; these read SQLKQLRELFRRFDMNGDGSLTQLELAALLRSLGLR, PTGDEVHALLAGMDANGNGSVEFDELAAAIAPVLTT, VDQAQLLEVFRAFDRDGNGFISAAELARSMARLGQP, and LTFEELTRMMRDADTDGDGVISFKEFAAVMAKSALD. Positions 34, 36, 38, 40, 45, 70, 72, 74, 76, 81, 110, 112, 114, 121, 146, 148, 150, and 157 each coordinate Ca(2+).

Potential calcium sensor. This chain is Probable calcium-binding protein CML14 (CML14), found in Oryza sativa subsp. japonica (Rice).